Here is a 559-residue protein sequence, read N- to C-terminus: MATALSEEELDNEDYYSLLNVRREASSEELKAAYRRLCMLYHPDKHRDPELKSQAERLFNLVHQAYEVLSDPQTRAIYDIYGKRGLEMEGWEVVERRRTPAEIREEFERLQREREERRLQQRTNPKGTISVGVDATDLFDRYDEEYEDVSGSSFPQIEINKMHISQSIEAPLTATDTAILSGSLSTQNGNGGGSINFALRRVTSAKGWGELEFGAGDLQGPLFGLKLFRNLTPRCFVTTNCALQFSSRGIRPGLTTVLARNLDKNTVGYLQWRWGIQSAMNTSIVRDTKTSHFTVALQLGIPHSFALISYQHKFQDDDQTRVKGSLKAGFFGTVVEYGAERKISRHSVLGAAVSIGVPQGVSLKVKLNRASQTYFFPIHLTDQLLPSAVFYATMGPLVVYFAMHRLIIKPYLRAQKEKELEKQRESAATDVLQKKQEAESAVRLMQESVRRIIEAEESRMGLIIVNAWYGKFVNDKSRKSEKVKVIDVTVPLQCLVKDSKLILTEASKAGLPGFYDPCVGEEKNLKVLYQFRGVLHQVMVLDSEALRIPKQSHRIDTDG.

A2 is subject to N-acetylalanine. The region spanning 14-82 (DYYSLLNVRR…QTRAIYDIYG (69 aa)) is the J domain. Position 204 is a phosphoserine (S204). A coiled-coil region spans residues 417–457 (EKELEKQRESAATDVLQKKQEAESAVRLMQESVRRIIEAEE).

This sequence belongs to the DNAJC11 family. As to quaternary structure, associates with the mitochondrial contact site and cristae organizing system (MICOS) complex, composed of at least MICOS10/MIC10, CHCHD3/MIC19, CHCHD6/MIC25, APOOL/MIC27, IMMT/MIC60, APOO/MIC23/MIC26 and QIL1/MIC13. This complex was also known under the names MINOS or MitOS complex. The MICOS complex associates with mitochondrial outer membrane proteins SAMM50, MTX1 and MTX2 (together described as components of the mitochondrial outer membrane sorting assembly machinery (SAM) complex) and DNAJC11, mitochondrial inner membrane protein TMEM11 and with HSPA9. The MICOS and SAM complexes together with DNAJC11 are part of a large protein complex spanning both membranes termed the mitochondrial intermembrane space bridging (MIB) complex.

It localises to the mitochondrion. Its subcellular location is the mitochondrion outer membrane. In terms of biological role, required for mitochondrial inner membrane organization. Seems to function through its association with the MICOS complex and the mitochondrial outer membrane sorting assembly machinery (SAM) complex. The protein is DnaJ homolog subfamily C member 11 (DNAJC11) of Pongo abelii (Sumatran orangutan).